Consider the following 463-residue polypeptide: L-seryl-tRNA(Sec) selenium transferase (463 aa).

The residue at position 295 (Lys295) is an N6-(pyridoxal phosphate)lysine.

This sequence belongs to the SelA family. In terms of assembly, homodecamer; pentamer of dimers. Binds only one seryl-tRNA(Sec) per dimer. It depends on pyridoxal 5'-phosphate as a cofactor.

The protein localises to the cytoplasm. The catalysed reaction is L-seryl-tRNA(Sec) + selenophosphate + H(+) = L-selenocysteinyl-tRNA(Sec) + phosphate. The protein operates within aminoacyl-tRNA biosynthesis; selenocysteinyl-tRNA(Sec) biosynthesis; selenocysteinyl-tRNA(Sec) from L-seryl-tRNA(Sec) (bacterial route): step 1/1. Its function is as follows. Converts seryl-tRNA(Sec) to selenocysteinyl-tRNA(Sec) required for selenoprotein biosynthesis. This Escherichia coli (strain K12 / MC4100 / BW2952) protein is L-seryl-tRNA(Sec) selenium transferase.